We begin with the raw amino-acid sequence, 165 residues long: Phosphopantetheine adenylyltransferase (165 aa).

Ser9 contributes to the substrate binding site. Residues 9–10 (SF) and His17 each bind ATP. Substrate-binding residues include Lys41, Val73, and Arg87. ATP contacts are provided by residues 88-90 (GLR), Glu98, and 123-129 (FTLLSSS).

The protein belongs to the bacterial CoaD family. As to quaternary structure, homohexamer. Mg(2+) is required as a cofactor.

The protein resides in the cytoplasm. The enzyme catalyses (R)-4'-phosphopantetheine + ATP + H(+) = 3'-dephospho-CoA + diphosphate. It participates in cofactor biosynthesis; coenzyme A biosynthesis; CoA from (R)-pantothenate: step 4/5. Its function is as follows. Reversibly transfers an adenylyl group from ATP to 4'-phosphopantetheine, yielding dephospho-CoA (dPCoA) and pyrophosphate. This chain is Phosphopantetheine adenylyltransferase, found in Herpetosiphon aurantiacus (strain ATCC 23779 / DSM 785 / 114-95).